The sequence spans 500 residues: uncharacterized protein (500 aa).

The segment covering 1–13 has biased composition (low complexity); it reads MEPSQRSGSFSSI. Residues 1-23 are disordered; sequence MEPSQRSGSFSSISRRRSRVDSR. The residue at position 9 (serine 9) is a Phosphoserine. 12 consecutive transmembrane segments (helical) span residues 87 to 107, 126 to 146, 156 to 176, 183 to 203, 225 to 245, 261 to 281, 312 to 332, 351 to 371, 380 to 400, 408 to 428, 445 to 465, and 471 to 491; these read VSIA…AVAL, LVIG…LCFA, LYFR…LLYC, WIYL…TFLY, MNIL…GILA, VASW…IFFF, FLLF…NGYQ, GNFI…SSFL, IMLG…VLDA, VYFF…APLI, IVVQ…GGAI, and VGFI…LIFM.

This sequence belongs to the major facilitator superfamily.

It localises to the golgi apparatus. The protein localises to the membrane. This is an uncharacterized protein from Schizosaccharomyces pombe (strain 972 / ATCC 24843) (Fission yeast).